We begin with the raw amino-acid sequence, 237 residues long: Phosphatidylserine decarboxylase proenzyme (237 aa).

Ser206 acts as the Schiff-base intermediate with substrate; via pyruvic acid in catalysis. Ser206 bears the Pyruvic acid (Ser); by autocatalysis mark.

It belongs to the phosphatidylserine decarboxylase family. PSD-A subfamily. In terms of assembly, heterodimer of a large membrane-associated beta subunit and a small pyruvoyl-containing alpha subunit. Requires pyruvate as cofactor. Is synthesized initially as an inactive proenzyme. Formation of the active enzyme involves a self-maturation process in which the active site pyruvoyl group is generated from an internal serine residue via an autocatalytic post-translational modification. Two non-identical subunits are generated from the proenzyme in this reaction, and the pyruvate is formed at the N-terminus of the alpha chain, which is derived from the carboxyl end of the proenzyme. The post-translation cleavage follows an unusual pathway, termed non-hydrolytic serinolysis, in which the side chain hydroxyl group of the serine supplies its oxygen atom to form the C-terminus of the beta chain, while the remainder of the serine residue undergoes an oxidative deamination to produce ammonia and the pyruvoyl prosthetic group on the alpha chain.

Its subcellular location is the cell membrane. The enzyme catalyses a 1,2-diacyl-sn-glycero-3-phospho-L-serine + H(+) = a 1,2-diacyl-sn-glycero-3-phosphoethanolamine + CO2. Its pathway is phospholipid metabolism; phosphatidylethanolamine biosynthesis; phosphatidylethanolamine from CDP-diacylglycerol: step 2/2. In terms of biological role, catalyzes the formation of phosphatidylethanolamine (PtdEtn) from phosphatidylserine (PtdSer). The sequence is that of Phosphatidylserine decarboxylase proenzyme from Rhodococcus erythropolis (strain PR4 / NBRC 100887).